Here is a 108-residue protein sequence, read N- to C-terminus: Ribonuclease P protein component 4 (108 aa).

Cys-60, Cys-63, Cys-86, and Cys-89 together coordinate Zn(2+).

Belongs to the eukaryotic/archaeal RNase P protein component 4 family. As to quaternary structure, consists of a catalytic RNA component and at least 4-5 protein subunits. Zn(2+) serves as cofactor.

The protein resides in the cytoplasm. It carries out the reaction Endonucleolytic cleavage of RNA, removing 5'-extranucleotides from tRNA precursor.. Functionally, part of ribonuclease P, a protein complex that generates mature tRNA molecules by cleaving their 5'-ends. The chain is Ribonuclease P protein component 4 from Sulfurisphaera tokodaii (strain DSM 16993 / JCM 10545 / NBRC 100140 / 7) (Sulfolobus tokodaii).